The sequence spans 240 residues: 7-cyano-7-deazaguanine synthase (240 aa).

Position 9 to 19 (9 to 19 (FSGGLDSTACL)) interacts with ATP. 4 residues coordinate Zn(2+): cysteine 195, cysteine 210, cysteine 213, and cysteine 216.

It belongs to the QueC family. Zn(2+) serves as cofactor.

It catalyses the reaction 7-carboxy-7-deazaguanine + NH4(+) + ATP = 7-cyano-7-deazaguanine + ADP + phosphate + H2O + H(+). It functions in the pathway purine metabolism; 7-cyano-7-deazaguanine biosynthesis. Functionally, catalyzes the ATP-dependent conversion of 7-carboxy-7-deazaguanine (CDG) to 7-cyano-7-deazaguanine (preQ(0)). The polypeptide is 7-cyano-7-deazaguanine synthase (Pyrococcus furiosus (strain ATCC 43587 / DSM 3638 / JCM 8422 / Vc1)).